The following is a 208-amino-acid chain: Imidazoleglycerol-phosphate dehydratase (208 aa).

It belongs to the imidazoleglycerol-phosphate dehydratase family.

It localises to the cytoplasm. The enzyme catalyses D-erythro-1-(imidazol-4-yl)glycerol 3-phosphate = 3-(imidazol-4-yl)-2-oxopropyl phosphate + H2O. Its pathway is amino-acid biosynthesis; L-histidine biosynthesis; L-histidine from 5-phospho-alpha-D-ribose 1-diphosphate: step 6/9. The chain is Imidazoleglycerol-phosphate dehydratase from Mycobacterium sp. (strain JLS).